Reading from the N-terminus, the 242-residue chain is Small ribosomal subunit protein uS2 (242 aa).

Belongs to the universal ribosomal protein uS2 family.

The protein is Small ribosomal subunit protein uS2 of Shewanella oneidensis (strain ATCC 700550 / JCM 31522 / CIP 106686 / LMG 19005 / NCIMB 14063 / MR-1).